We begin with the raw amino-acid sequence, 1470 residues long: Guanine nucleotide exchange factor subunit R06F6.8 (1470 aa).

WD repeat units follow at residues Ser20–Ser58, Glu68–Cys107, and Ala472–Val512. Disordered stretches follow at residues Gln673–Gln710, Phe975–Ser1001, Arg1017–Lys1045, and Arg1238–Ser1259. Over residues Ser689–Pro707 the composition is skewed to low complexity. Residues Ala983–Ser1001 are compositionally biased toward polar residues. Positions Glu1028–Lys1045 are enriched in basic and acidic residues. The helical transmembrane segment at Leu1294–Leu1314 threads the bilayer. Residues Ser1385–Lys1403 show a composition bias toward basic and acidic residues. The tract at residues Ser1385–Lys1447 is disordered. Positions Ser1411–Lys1424 are enriched in polar residues. Residues Gly1431–Lys1447 are compositionally biased toward basic and acidic residues.

Belongs to the RIC1 family. In terms of assembly, component of a guanine nucleotide exchange factor (GEF) complex.

Its subcellular location is the membrane. Functionally, probable component of a guanine nucleotide exchange factor (GEF) that may be required for efficient fusion of endosome-derived vesicles with the Golgi. This Caenorhabditis elegans protein is Guanine nucleotide exchange factor subunit R06F6.8.